A 150-amino-acid polypeptide reads, in one-letter code: Large ribosomal subunit protein uL11 (150 aa).

It belongs to the universal ribosomal protein uL11 family. In terms of assembly, part of the ribosomal stalk of the 50S ribosomal subunit. Interacts with L10 and the large rRNA to form the base of the stalk. L10 forms an elongated spine to which L12 dimers bind in a sequential fashion forming a multimeric L10(L12)X complex. In terms of processing, one or more lysine residues are methylated.

Functionally, forms part of the ribosomal stalk which helps the ribosome interact with GTP-bound translation factors. This chain is Large ribosomal subunit protein uL11, found in Ureaplasma urealyticum serovar 10 (strain ATCC 33699 / Western).